Reading from the N-terminus, the 80-residue chain is SPbeta prophage-derived uncharacterized HTH-type transcriptional regulator YotL (80 aa).

Residues L12–L67 form the HTH cro/C1-type domain. A DNA-binding region (H-T-H motif) is located at residues I23–G42.

The chain is SPbeta prophage-derived uncharacterized HTH-type transcriptional regulator YotL (yotL) from Bacillus subtilis (strain 168).